The chain runs to 401 residues: Deacetoxyvindoline 4-hydroxylase (401 aa).

Residues 242 to 345 (CAEGLILLGH…SVAVAFGIKT (104 aa)) enclose the Fe2OG dioxygenase domain. Fe cation is bound by residues His268, Asp270, and His324. Arg334 serves as a coordination point for 2-oxoglutarate.

Belongs to the iron/ascorbate-dependent oxidoreductase family. As to quaternary structure, monomer. Requires Fe cation as cofactor. It depends on L-ascorbate as a cofactor. Highest levels in leaves, lower levels in stems and fruits. Not expressed in flowers and roots.

The protein resides in the cytoplasm. It is found in the nucleus. The catalysed reaction is deacetoxyvindoline + 2-oxoglutarate + O2 = 4-O-deacetylvindoline + succinate + CO2. It participates in alkaloid biosynthesis; vindoline biosynthesis. In terms of biological role, catalyzes the C4-hydroxylation of desacetoxyvindoline. The sequence is that of Deacetoxyvindoline 4-hydroxylase from Catharanthus roseus (Madagascar periwinkle).